Reading from the N-terminus, the 123-residue chain is Pre-B lymphocyte protein 3 (123 aa).

An N-terminal signal peptide occupies residues 1–20 (MACRCLSFLLMGTFLSVSQT). The Ig-like domain occupies 21–123 (VLAQLDALLV…YCSVGYGFSP (103 aa)). Cysteines 40 and 115 form a disulfide.

This sequence belongs to the immunoglobulin superfamily. In terms of tissue distribution, expressed in B-cell precursors. Expressed in fetal liver, bone marrow, spleen and lymph node.

Associates with the Ig-mu chain to form a molecular complex that is expressed on the surface of pre-B-cells. This chain is Pre-B lymphocyte protein 3 (VPREB3), found in Homo sapiens (Human).